A 106-amino-acid polypeptide reads, in one-letter code: Integration host factor subunit beta (106 aa).

The interval 57–106 (PARAGRNPRTGEHVPVEQKSVPFFKTGKEMRERLNRDGLDGATPPSPPAA) is disordered. Positions 82–95 (TGKEMRERLNRDGL) are enriched in basic and acidic residues.

It belongs to the bacterial histone-like protein family. As to quaternary structure, heterodimer of an alpha and a beta chain.

Its function is as follows. This protein is one of the two subunits of integration host factor, a specific DNA-binding protein that functions in genetic recombination as well as in transcriptional and translational control. The sequence is that of Integration host factor subunit beta from Afipia carboxidovorans (strain ATCC 49405 / DSM 1227 / KCTC 32145 / OM5) (Oligotropha carboxidovorans).